A 401-amino-acid polypeptide reads, in one-letter code: Beta-ketoadipyl-CoA thiolase (401 aa).

Cys-90 (acyl-thioester intermediate) is an active-site residue. Catalysis depends on proton acceptor residues His-357 and Cys-387.

This sequence belongs to the thiolase-like superfamily. Thiolase family.

It carries out the reaction succinyl-CoA + acetyl-CoA = 3-oxoadipyl-CoA + CoA. It functions in the pathway aromatic compound metabolism; beta-ketoadipate pathway; acetyl-CoA and succinyl-CoA from 3-oxoadipate: step 2/2. In terms of biological role, catalyzes thiolytic cleavage of beta-ketoadipyl-CoA to succinyl-CoA and acetyl-CoA. This Acinetobacter baylyi (strain ATCC 33305 / BD413 / ADP1) protein is Beta-ketoadipyl-CoA thiolase (pcaF).